We begin with the raw amino-acid sequence, 367 residues long: Alanine racemase (367 aa).

Residue lysine 40 is the Proton acceptor; specific for D-alanine of the active site. Position 40 is an N6-(pyridoxal phosphate)lysine (lysine 40). Arginine 136 provides a ligand contact to substrate. Tyrosine 263 functions as the Proton acceptor; specific for L-alanine in the catalytic mechanism. Methionine 310 lines the substrate pocket.

The protein belongs to the alanine racemase family. The cofactor is pyridoxal 5'-phosphate.

It catalyses the reaction L-alanine = D-alanine. Its pathway is amino-acid biosynthesis; D-alanine biosynthesis; D-alanine from L-alanine: step 1/1. In terms of biological role, catalyzes the interconversion of L-alanine and D-alanine. May also act on other amino acids. This is Alanine racemase (alr) from Streptococcus pneumoniae (strain Taiwan19F-14).